Reading from the N-terminus, the 314-residue chain is Olfactory receptor 5I1 (314 aa).

Topologically, residues 1–27 (MEFTDRNYTLVTEFILLGFPTRPELQI) are extracellular. N-linked (GlcNAc...) asparagine glycosylation is present at asparagine 7. Residues 28–48 (VLFLMFLTLYAIILIGNIGLM) form a helical membrane-spanning segment. Residues 49–56 (LLIRIDPH) are Cytoplasmic-facing. Residues 57–77 (LQTPMYFFLSNLSFVDLCYFS) traverse the membrane as a helical segment. Over 78–101 (DIVPKMLVNFLSENKSISYYGCAL) the chain is Extracellular. A disulfide bridge links cysteine 99 with cysteine 191. A helical membrane pass occupies residues 102 to 122 (QFYFFCTFADTESFILAAMAY). Residues 123–141 (DRYVAICNPLLYTVVMSRG) are Cytoplasmic-facing. Residues 142-162 (ICMRLIVLSYLGGNMSSLVHT) form a helical membrane-spanning segment. The Extracellular portion of the chain corresponds to 163–198 (SFAFILKYCDKNVINHFFCDLPPLLKLSCTDTTINE). The chain crosses the membrane as a helical span at residues 199-219 (WLLSTYGSSVEIICFIIIIIS). Over 220–239 (YFFILLSVLKIRSFSGRKKT) the chain is Cytoplasmic. The chain crosses the membrane as a helical span at residues 240–260 (FSTCASHLTSVTIYQGTLLFI). The Extracellular portion of the chain corresponds to 261 to 273 (YSRPSYLYSPNTD). A helical transmembrane segment spans residues 274–294 (KIISVFYTIFIPVLNPLIYSL). Topologically, residues 295-314 (RNKDVKDAAEKVLRSKVDSS) are cytoplasmic.

The protein belongs to the G-protein coupled receptor 1 family.

It localises to the cell membrane. Functionally, odorant receptor. The chain is Olfactory receptor 5I1 (OR5I1) from Homo sapiens (Human).